The following is a 524-amino-acid chain: CDC50-related protein CDC50.1 (524 aa).

Composition is skewed to polar residues over residues 1 to 19 (MGENSTTGLRGQADVSQFS) and 26 to 39 (TLSSPPTGQRQQSL). Disordered stretches follow at residues 1–40 (MGENSTTGLRGQADVSQFSDAAVEPTLSSPPTGQRQQSLP) and 52–86 (APSVGGGGGWPFQRQGSSRLTSRGTSLSSCSDAGS). Residues 1-181 (MGENSTTGLR…GMYPLWSAGV (181 aa)) are Cytoplasmic-facing. A compositionally biased stretch (low complexity) spans 67 to 80 (GSSRLTSRGTSLSS). A helical transmembrane segment spans residues 182-202 (VLRLCLLGALFFVSVGAWLIF). Over 203–473 (EDEQHVECKL…VQKSRLGGRS (271 aa)) the chain is Extracellular. N-linked (GlcNAc...) asparagine glycans are attached at residues Asn-297 and Asn-339. The helical transmembrane segment at 474–494 (LFIGIAYLSFGCLLTMLVFYM) threads the bilayer. Topologically, residues 495 to 524 (LWKKWQYRREGEEIRDLRWQTKTRGSKKTK) are cytoplasmic.

Belongs to the CDC50/LEM3 family. As to quaternary structure, interacts with GC; the interaction regulates guanylate cyclase GC trafficking and sensing environmental changes.

The protein localises to the membrane. In terms of biological role, in tachyzoites, required for the cellular trafficking of guanylate cyclase GC and UGO to the cell membrane. May play a role in the folding of the GC P-type ATPase-like domain to sense vacuolar changes in phosphatidic acid and pH levels which trigger parasite egress. This Toxoplasma gondii (strain ATCC 50853 / GT1) protein is CDC50-related protein CDC50.1.